The following is a 215-amino-acid chain: N-(5'-phosphoribosyl)anthranilate isomerase (215 aa).

It belongs to the TrpF family.

It carries out the reaction N-(5-phospho-beta-D-ribosyl)anthranilate = 1-(2-carboxyphenylamino)-1-deoxy-D-ribulose 5-phosphate. It participates in amino-acid biosynthesis; L-tryptophan biosynthesis; L-tryptophan from chorismate: step 3/5. This chain is N-(5'-phosphoribosyl)anthranilate isomerase, found in Ruegeria sp. (strain TM1040) (Silicibacter sp.).